The sequence spans 536 residues: Nuclear hormone receptor family member nhr-7 (536 aa).

The nuclear receptor DNA-binding region spans 6–82 (NRICAVCGDT…VGMNPDYVRP (77 aa)). 2 NR C4-type zinc fingers span residues 9 to 29 (CAVC…CFGC) and 46 to 70 (CRFE…FRKC). Positions 155–378 (ADRSLARKTG…PFHKILTDII (224 aa)) constitute an NR LBD domain. Residues 427–465 (SPCQISAPPPPQQQYTDYSQMPSTSSYPANSSPFQSPYR) are disordered. The segment covering 439–465 (QQYTDYSQMPSTSSYPANSSPFQSPYR) has biased composition (polar residues).

It belongs to the nuclear hormone receptor family.

The protein localises to the nucleus. Functionally, orphan nuclear receptor. This Caenorhabditis elegans protein is Nuclear hormone receptor family member nhr-7 (nhr-7).